We begin with the raw amino-acid sequence, 319 residues long: Ribonuclease Z (319 aa).

The Zn(2+) site is built by His-62, His-64, Asp-66, His-67, His-145, Asp-215, and His-273. Asp-66 (proton acceptor) is an active-site residue.

The protein belongs to the RNase Z family. As to quaternary structure, homodimer. Zn(2+) is required as a cofactor.

The catalysed reaction is Endonucleolytic cleavage of RNA, removing extra 3' nucleotides from tRNA precursor, generating 3' termini of tRNAs. A 3'-hydroxy group is left at the tRNA terminus and a 5'-phosphoryl group is left at the trailer molecule.. In terms of biological role, zinc phosphodiesterase, which displays some tRNA 3'-processing endonuclease activity. Probably involved in tRNA maturation, by removing a 3'-trailer from precursor tRNA. In Borrelia hermsii (strain HS1 / DAH), this protein is Ribonuclease Z.